The sequence spans 334 residues: Glycerol-3-phosphate dehydrogenase [NAD(P)+] (334 aa).

NADPH-binding residues include Tyr14 and Lys108. Sn-glycerol 3-phosphate contacts are provided by Lys108, Gly140, and Ser142. An NADPH-binding site is contributed by Ala144. Residues Lys195, Asp248, Ser258, Arg259, and Asn260 each coordinate sn-glycerol 3-phosphate. Residue Lys195 is the Proton acceptor of the active site. NADPH is bound at residue Arg259. Glu285 contributes to the NADPH binding site.

Belongs to the NAD-dependent glycerol-3-phosphate dehydrogenase family.

It localises to the cytoplasm. The enzyme catalyses sn-glycerol 3-phosphate + NAD(+) = dihydroxyacetone phosphate + NADH + H(+). The catalysed reaction is sn-glycerol 3-phosphate + NADP(+) = dihydroxyacetone phosphate + NADPH + H(+). It participates in membrane lipid metabolism; glycerophospholipid metabolism. Its function is as follows. Catalyzes the reduction of the glycolytic intermediate dihydroxyacetone phosphate (DHAP) to sn-glycerol 3-phosphate (G3P), the key precursor for phospholipid synthesis. This is Glycerol-3-phosphate dehydrogenase [NAD(P)+] from Mesoplasma florum (strain ATCC 33453 / NBRC 100688 / NCTC 11704 / L1) (Acholeplasma florum).